The chain runs to 215 residues: MTKLTARQQQVFDLIRRAIERSGFPPTRAEIAAELGFSSPNAAEEHLRALARKGVIELAAGASRGIRLLGIDDAPHQFTLPHAGLMQLSLPLVGRVAAGSPILAQEHISQHYACDPALFTSKPDYLLKVRGLSMRDAGILDGDLLAVQKRTEAKDGQIIVARLGDDVTVKRLMRRPGGLELIAENPDYENIFVKAGSAEFALEGIAVGLIRSGEL.

A DNA-binding region (H-T-H motif) is located at residues 28-48 (RAEIAAELGFSSPNAAEEHLR). Active-site for autocatalytic cleavage activity residues include S133 and K170.

This sequence belongs to the peptidase S24 family. As to quaternary structure, homodimer.

The enzyme catalyses Hydrolysis of Ala-|-Gly bond in repressor LexA.. Represses a number of genes involved in the response to DNA damage (SOS response), including recA and lexA. In the presence of single-stranded DNA, RecA interacts with LexA causing an autocatalytic cleavage which disrupts the DNA-binding part of LexA, leading to derepression of the SOS regulon and eventually DNA repair. In Burkholderia ambifaria (strain MC40-6), this protein is LexA repressor.